A 258-amino-acid polypeptide reads, in one-letter code: Indole-3-glycerol phosphate synthase (258 aa).

The protein belongs to the TrpC family.

The catalysed reaction is 1-(2-carboxyphenylamino)-1-deoxy-D-ribulose 5-phosphate + H(+) = (1S,2R)-1-C-(indol-3-yl)glycerol 3-phosphate + CO2 + H2O. It participates in amino-acid biosynthesis; L-tryptophan biosynthesis; L-tryptophan from chorismate: step 4/5. This chain is Indole-3-glycerol phosphate synthase, found in Geobacillus kaustophilus (strain HTA426).